We begin with the raw amino-acid sequence, 344 residues long: Protein RecA (344 aa).

65–72 (GPESSGKT) is an ATP binding site. Basic and acidic residues predominate over residues 323 to 337 (ELREKFQPAEAPREA). The interval 323 to 344 (ELREKFQPAEAPREAGDDEDKE) is disordered.

The protein belongs to the RecA family.

The protein resides in the cytoplasm. Functionally, can catalyze the hydrolysis of ATP in the presence of single-stranded DNA, the ATP-dependent uptake of single-stranded DNA by duplex DNA, and the ATP-dependent hybridization of homologous single-stranded DNAs. It interacts with LexA causing its activation and leading to its autocatalytic cleavage. In Xanthomonas axonopodis pv. citri (strain 306), this protein is Protein RecA.